Here is a 286-residue protein sequence, read N- to C-terminus: uncharacterized protein (286 aa).

The signal sequence occupies residues 1–19 (MISKEYISLLSALLTKGYS).

This is an uncharacterized protein from Acidianus filamentous virus 2 (isolate Italy/Pozzuoli) (AFV-2).